The sequence spans 212 residues: uncharacterized protein (212 aa).

Residues 47–129 (RELLDRRRSQ…GNIDNGQPRR (83 aa)) are disordered.

This is an uncharacterized protein from Caenorhabditis elegans.